We begin with the raw amino-acid sequence, 132 residues long: Telomere bouquet protein 1 (132 aa).

In terms of assembly, interacts with bqt2 and sad1. The bqt1-bqt2-sad1 complex binds rap1.

Its subcellular location is the cytoplasm. The protein resides in the cytoskeleton. It is found in the microtubule organizing center. It localises to the spindle pole body. The protein localises to the chromosome. Its subcellular location is the telomere. Functionally, involved in chromosome segregation. During meiotic prophase, connects telomeres to the spindle pole body by forming a bridge between the telomere protein rap1 and the spindle pole body protein sad1. This chain is Telomere bouquet protein 1 (bqt1), found in Schizosaccharomyces pombe (strain 972 / ATCC 24843) (Fission yeast).